The primary structure comprises 202 residues: Inner membrane-spanning protein YciB (202 aa).

A run of 5 helical transmembrane segments spans residues 47–67 (ILLATVVVIAATVAQIIWVHF), 75–95 (MLWVSLVLVVVFGGLTLAFQN), 101–121 (WKPTILYWVFAGSMIFSAFIL), 146–166 (LSWIGFFLFMGALNLFVAFNF), and 174–194 (FKLFGGMGLMLVFVLGQGMLL).

It belongs to the YciB family.

The protein resides in the cell inner membrane. Functionally, plays a role in cell envelope biogenesis, maintenance of cell envelope integrity and membrane homeostasis. The protein is Inner membrane-spanning protein YciB of Dechloromonas aromatica (strain RCB).